We begin with the raw amino-acid sequence, 59 residues long: Large ribosomal subunit protein uL30 (59 aa).

This sequence belongs to the universal ribosomal protein uL30 family. Part of the 50S ribosomal subunit.

This chain is Large ribosomal subunit protein uL30, found in Staphylococcus aureus (strain JH1).